We begin with the raw amino-acid sequence, 128 residues long: Large ribosomal subunit protein bL12 (128 aa).

In terms of assembly, homodimer. Part of the 50S ribosomal subunit; present in 6 copies per ribosome. Forms part of the ribosomal stalk which helps the ribosome interact with GTP-bound translation factors. Forms a heptameric L10(L12)2(L12)2(L12)2 complex, where L10 forms an elongated spine to which 3 L12 dimers bind in a sequential fashion.

Forms part of the ribosomal stalk which helps the ribosome interact with GTP-bound translation factors. Is thus essential for accurate translation. The chain is Large ribosomal subunit protein bL12 from Thermotoga maritima (strain ATCC 43589 / DSM 3109 / JCM 10099 / NBRC 100826 / MSB8).